Here is a 418-residue protein sequence, read N- to C-terminus: Gamma-glutamyl phosphate reductase (418 aa).

It belongs to the gamma-glutamyl phosphate reductase family.

The protein localises to the cytoplasm. It carries out the reaction L-glutamate 5-semialdehyde + phosphate + NADP(+) = L-glutamyl 5-phosphate + NADPH + H(+). It participates in amino-acid biosynthesis; L-proline biosynthesis; L-glutamate 5-semialdehyde from L-glutamate: step 2/2. Functionally, catalyzes the NADPH-dependent reduction of L-glutamate 5-phosphate into L-glutamate 5-semialdehyde and phosphate. The product spontaneously undergoes cyclization to form 1-pyrroline-5-carboxylate. This is Gamma-glutamyl phosphate reductase from Photobacterium profundum (strain SS9).